The chain runs to 232 residues: Protein UL24 homolog (232 aa).

Residues proline 191 to asparagine 232 form a disordered region.

This sequence belongs to the herpesviridae UL24 family.

The protein resides in the virion. Its subcellular location is the host cytoplasm. It localises to the host nucleus. The protein localises to the host nucleolus. It is found in the host Golgi apparatus. Functionally, may participate in nuclear egress of viral particles. Plays a role in the dispersal of several host nucleolar proteins including NCL/nucleolin and NPM1. Since deletion of host NCL/nucleolin negatively impact on nuclear egress, UL24 supposedly acts on this process through its effect on host nucleoli. In Elephas maximus (Indian elephant), this protein is Protein UL24 homolog.